The sequence spans 319 residues: Acetyl-coenzyme A carboxylase carboxyl transferase subunit alpha (319 aa).

The CoA carboxyltransferase C-terminal domain occupies 32 to 293 (NVDTEVRALE…KAVLLNELEA (262 aa)).

Belongs to the AccA family. Acetyl-CoA carboxylase is a heterohexamer composed of biotin carboxyl carrier protein (AccB), biotin carboxylase (AccC) and two subunits each of ACCase subunit alpha (AccA) and ACCase subunit beta (AccD).

It is found in the cytoplasm. The catalysed reaction is N(6)-carboxybiotinyl-L-lysyl-[protein] + acetyl-CoA = N(6)-biotinyl-L-lysyl-[protein] + malonyl-CoA. Its pathway is lipid metabolism; malonyl-CoA biosynthesis; malonyl-CoA from acetyl-CoA: step 1/1. Component of the acetyl coenzyme A carboxylase (ACC) complex. First, biotin carboxylase catalyzes the carboxylation of biotin on its carrier protein (BCCP) and then the CO(2) group is transferred by the carboxyltransferase to acetyl-CoA to form malonyl-CoA. The protein is Acetyl-coenzyme A carboxylase carboxyl transferase subunit alpha of Xylella fastidiosa (strain 9a5c).